The chain runs to 235 residues: DUP240 protein DFP4 (235 aa).

Topologically, residues 1–44 (MSSELLISNSKPRPEGLRKLCEGETVILPRDITPSKCAYFLKQN) are cytoplasmic. Residues 45–65 (IVFISYIFIHIIITIILNRLA) traverse the membrane as a helical segment. At 66-72 (LSAHGNT) the chain is on the extracellular side. A helical membrane pass occupies residues 73–93 (LIIILAALLITISLFLLLLLP). The Cytoplasmic portion of the chain corresponds to 94–235 (YLSCSRYKLR…DKYPEMGVTV (142 aa)).

This sequence belongs to the DUP/COS family. In terms of assembly, interacts according to large scale protein interaction studies with BZZ1, SRB4 and SUA7.

It is found in the cell membrane. This chain is DUP240 protein DFP4, found in Saccharomyces cerevisiae (strain ATCC 204508 / S288c) (Baker's yeast).